Consider the following 144-residue polypeptide: Eukaryotic translation initiation factor 1A, Y-chromosomal (144 aa).

Residues 1–15 (MPKNKGKGGKNRRRG) are compositionally biased toward basic residues. The tract at residues 1 to 26 (MPKNKGKGGKNRRRGKNENESEKREL) is disordered. The segment covering 16-26 (KNENESEKREL) has biased composition (basic and acidic residues). The S1-like domain maps to 22 to 96 (EKRELVFKED…NKADVILKYN (75 aa)). Lysine 88 is covalently cross-linked (Glycyl lysine isopeptide (Lys-Gly) (interchain with G-Cter in ubiquitin)). Residues 114-144 (KINETDTFGPGDDDEVQFDDIGDDDEDIDDI) form a disordered region. Positions 124–144 (GDDDEVQFDDIGDDDEDIDDI) are enriched in acidic residues.

This sequence belongs to the eIF-1A family. In terms of assembly, component of the 43S pre-initiation complex (43S PIC), which is composed of the 40S ribosomal subunit, EIF1, eIF1A (EIF1AX), eIF3 complex, EIF5 and eIF2-GTP-initiator tRNA complex (eIF2 ternary complex). Interacts with EIF5; this interaction contributes to the maintenance of EIF1 within the open 43S PIC. Interacts through its C-terminal domain (CTD) with the CTD of EIF5B; from the location of the start codon by the 43S complex until the formation of the 80S complex. As to expression, ubiquitous.

It is found in the cytoplasm. In terms of biological role, component of the 43S pre-initiation complex (43S PIC), which binds to the mRNA cap-proximal region, scans mRNA 5'-untranslated region, and locates the initiation codon. This protein enhances formation of the cap-proximal complex. Together with EIF1, facilitates scanning, start codon recognition, promotion of the assembly of 48S complex at the initiation codon (43S PIC becomes 48S PIC after the start codon is reached), and dissociation of aberrant complexes. After start codon location, together with EIF5B orients the initiator methionine-tRNA in a conformation that allows 60S ribosomal subunit joining to form the 80S initiation complex. Is released after 80S initiation complex formation, just after GTP hydrolysis by EIF5B, and before release of EIF5B. Its globular part is located in the A site of the 40S ribosomal subunit. Its interaction with EIF5 during scanning contribute to the maintenance of EIF1 within the open 43S PIC. In contrast to yeast orthologs, does not bind EIF1. This Pan troglodytes (Chimpanzee) protein is Eukaryotic translation initiation factor 1A, Y-chromosomal (EIF1AY).